The following is a 40-amino-acid chain: MADTTGRIPLWIIGTVTGILVIGLVGIFFYGSYSGLGSSL.

Residues 8–28 (IPLWIIGTVTGILVIGLVGIF) form a helical membrane-spanning segment.

This sequence belongs to the PsbJ family. As to quaternary structure, PSII is composed of 1 copy each of membrane proteins PsbA, PsbB, PsbC, PsbD, PsbE, PsbF, PsbH, PsbI, PsbJ, PsbK, PsbL, PsbM, PsbT, PsbX, PsbY, PsbZ, Psb30/Ycf12, at least 3 peripheral proteins of the oxygen-evolving complex and a large number of cofactors. It forms dimeric complexes.

The protein resides in the plastid. The protein localises to the chloroplast thylakoid membrane. Its function is as follows. One of the components of the core complex of photosystem II (PSII). PSII is a light-driven water:plastoquinone oxidoreductase that uses light energy to abstract electrons from H(2)O, generating O(2) and a proton gradient subsequently used for ATP formation. It consists of a core antenna complex that captures photons, and an electron transfer chain that converts photonic excitation into a charge separation. This is Photosystem II reaction center protein J from Jasminum nudiflorum (Winter jasmine).